The sequence spans 438 residues: 23S rRNA (uracil(1939)-C(5))-methyltransferase RlmD (438 aa).

Residues 13 to 71 (KAPLGPMQTYLVEGLTHEAKGVARLNGKVTFIEGALPGETVTAQVNKPGRRFDEAVLNA) form the TRAM domain. Residues C84, C90, C93, and C167 each contribute to the [4Fe-4S] cluster site. Q271, F300, N305, E321, D348, and D368 together coordinate S-adenosyl-L-methionine. The Nucleophile role is filled by C394.

It belongs to the class I-like SAM-binding methyltransferase superfamily. RNA M5U methyltransferase family. RlmD subfamily.

The catalysed reaction is uridine(1939) in 23S rRNA + S-adenosyl-L-methionine = 5-methyluridine(1939) in 23S rRNA + S-adenosyl-L-homocysteine + H(+). Catalyzes the formation of 5-methyl-uridine at position 1939 (m5U1939) in 23S rRNA. The sequence is that of 23S rRNA (uracil(1939)-C(5))-methyltransferase RlmD from Marinomonas posidonica (strain CECT 7376 / NCIMB 14433 / IVIA-Po-181).